Consider the following 140-residue polypeptide: Histone H2B (140 aa).

The segment covering methionine 1–proline 10 has biased composition (basic and acidic residues). The tract at residues methionine 1–lysine 48 is disordered. Residues lysine 8 and lysine 9 each carry the N6-acetyllysine; alternate modification. Glycyl lysine isopeptide (Lys-Gly) (interchain with G-Cter in SUMO); alternate cross-links involve residues lysine 8 and lysine 9. Low complexity predominate over residues serine 11 to alanine 21. Residue lysine 15 is modified to N6-acetyllysine. Lysine 25 carries the N6-acetyllysine; alternate modification. Lysine 25 participates in a covalent cross-link: Glycyl lysine isopeptide (Lys-Gly) (interchain with G-Cter in SUMO); alternate. Residue lysine 26 forms a Glycyl lysine isopeptide (Lys-Gly) (interchain with G-Cter in SUMO) linkage. Residue lysine 134 forms a Glycyl lysine isopeptide (Lys-Gly) (interchain with G-Cter in ubiquitin) linkage.

It belongs to the histone H2B family. The nucleosome is a histone octamer containing two molecules each of H2A, H2B, H3 and H4 assembled in one H3-H4 heterotetramer and two H2A-H2B heterodimers. The octamer wraps approximately 147 bp of DNA. Monoubiquitinated by the ubc2-bre1 complex to form H2BK123ub1. H2BK123ub1 gives a specific tag for epigenetic transcriptional activation and is also prerequisite for H3K4me and H3K79me formation. H2BK123ub1 also modulates the formation of double-strand breaks during meiosis and is a prerequisite for DNA-damage checkpoint activation. Post-translationally, acetylated by gcn5 to form H2BK11ac and H2BK16ac. H2BK16ac can also be formed by esa1. Acetylation of N-terminal lysines and particularly formation of H2BK11acK16ac has a positive effect on transcription. In terms of processing, sumoylation to form H2BK6su or H2BK7su, and probably also H2BK16su or H2BK17su, occurs preferentially near the telomeres and represses gene transcription.

It is found in the nucleus. The protein localises to the chromosome. Core component of nucleosome. Nucleosomes wrap and compact DNA into chromatin, limiting DNA accessibility to the cellular machineries which require DNA as a template. Histones thereby play a central role in transcription regulation, DNA repair, DNA replication and chromosomal stability. DNA accessibility is regulated via a complex set of post-translational modifications of histones, also called histone code, and nucleosome remodeling. The polypeptide is Histone H2B (htb1) (Neosartorya fischeri (strain ATCC 1020 / DSM 3700 / CBS 544.65 / FGSC A1164 / JCM 1740 / NRRL 181 / WB 181) (Aspergillus fischerianus)).